The chain runs to 290 residues: Cbb3-type cytochrome c oxidase subunit FixP (290 aa).

Residues 33–53 (WWVITFYITIVWAIGYWIVYP) form a helical membrane-spanning segment. 2 consecutive Cytochrome c domains span residues 109 to 198 (LARA…RSLS) and 206 to 287 (YDAA…HSLG). 8 residues coordinate heme c: C122, C125, H126, M173, C219, C222, H223, and M264.

Belongs to the CcoP / FixP family. Component of the cbb3-type cytochrome c oxidase at least composed of FixN, FixO, FixQ and FixP. Requires heme c as cofactor.

It is found in the cell inner membrane. The protein operates within energy metabolism; oxidative phosphorylation. In terms of biological role, C-type cytochrome. Part of the cbb3-type cytochrome c oxidase complex. FixP subunit is required for transferring electrons from donor cytochrome c via its heme groups to FixO subunit. From there, electrons are shuttled to the catalytic binuclear center of FixN subunit where oxygen reduction takes place. The complex also functions as a proton pump. The protein is Cbb3-type cytochrome c oxidase subunit FixP of Bradyrhizobium sp. (strain ORS 278).